The sequence spans 405 residues: Elongation factor Tu (405 aa).

Residues 10-215 form the tr-type G domain; the sequence is KPHVNVGTIG…AVDSYIPTPE (206 aa). A G1 region spans residues 19 to 26; the sequence is GHVDHGKT. 19–26 provides a ligand contact to GTP; that stretch reads GHVDHGKT. A Mg(2+)-binding site is contributed by T26. Positions 61–65 are G2; it reads GITIN. A G3 region spans residues 82-85; that stretch reads DCPG. Residues 82 to 86 and 137 to 140 each bind GTP; these read DCPGH and NKVD. Residues 137-140 are G4; sequence NKVD. Residues 175 to 177 form a G5 region; sequence SAL.

It belongs to the TRAFAC class translation factor GTPase superfamily. Classic translation factor GTPase family. EF-Tu/EF-1A subfamily. As to quaternary structure, monomer.

Its subcellular location is the cytoplasm. It catalyses the reaction GTP + H2O = GDP + phosphate + H(+). Its function is as follows. GTP hydrolase that promotes the GTP-dependent binding of aminoacyl-tRNA to the A-site of ribosomes during protein biosynthesis. This is Elongation factor Tu from Deinonema sp.